The sequence spans 351 residues: Xaa-Pro dipeptidase (351 aa).

Co(2+) is bound by residues aspartate 212, aspartate 223, histidine 287, glutamate 316, and glutamate 330.

Belongs to the peptidase M24B family. Archaeal-type prolidase subfamily. In terms of assembly, homodimer. Requires Co(2+) as cofactor.

It localises to the cytoplasm. The enzyme catalyses Xaa-L-Pro dipeptide + H2O = an L-alpha-amino acid + L-proline. Functionally, splits dipeptides with a prolyl in the C-terminal position and a nonpolar amino acid at the N-terminal position. This chain is Xaa-Pro dipeptidase (pepQ), found in Pyrococcus horikoshii (strain ATCC 700860 / DSM 12428 / JCM 9974 / NBRC 100139 / OT-3).